The chain runs to 864 residues: DNA mismatch repair protein MutS (864 aa).

607–614 (GPNMGGKS) provides a ligand contact to ATP.

It belongs to the DNA mismatch repair MutS family.

In terms of biological role, this protein is involved in the repair of mismatches in DNA. It is possible that it carries out the mismatch recognition step. This protein has a weak ATPase activity. The sequence is that of DNA mismatch repair protein MutS from Neisseria meningitidis serogroup B (strain ATCC BAA-335 / MC58).